The chain runs to 301 residues: tRNA dimethylallyltransferase 1 (301 aa).

10 to 17 (GPTASGKT) is a binding site for ATP. 12–17 (TASGKT) contributes to the substrate binding site. Residues 35 to 38 (DSRQ) form an interaction with substrate tRNA region.

The protein belongs to the IPP transferase family. Monomer. Mg(2+) is required as a cofactor.

It carries out the reaction adenosine(37) in tRNA + dimethylallyl diphosphate = N(6)-dimethylallyladenosine(37) in tRNA + diphosphate. Catalyzes the transfer of a dimethylallyl group onto the adenine at position 37 in tRNAs that read codons beginning with uridine, leading to the formation of N6-(dimethylallyl)adenosine (i(6)A). The polypeptide is tRNA dimethylallyltransferase 1 (Geotalea uraniireducens (strain Rf4) (Geobacter uraniireducens)).